The sequence spans 213 residues: Probable GTP-binding protein EngB (213 aa).

The EngB-type G domain occupies 25 to 203 (EGTEVAFAGR…EDVLNGWLLP (179 aa)). Residues 33-40 (GRSNAGKS), 60-64 (GRTQL), 80-83 (DLPG), 147-150 (TKAD), and 179-184 (AQMFSA) contribute to the GTP site. Residues Ser-40 and Thr-62 each coordinate Mg(2+).

Belongs to the TRAFAC class TrmE-Era-EngA-EngB-Septin-like GTPase superfamily. EngB GTPase family. Mg(2+) serves as cofactor.

In terms of biological role, necessary for normal cell division and for the maintenance of normal septation. This Saccharophagus degradans (strain 2-40 / ATCC 43961 / DSM 17024) protein is Probable GTP-binding protein EngB.